Reading from the N-terminus, the 389-residue chain is MEGALAANWSAEAANASAAPPGAEGNRTAGPPRRNEALARVEVAVLCLILLLALSGNACVLLALRTTRQKHSRLFFFMKHLSIADLVVAVFQVLPQLLWDITFRFYGPDLLCRLVKYLQVVGMFASTYLLLLMSLDRCLAICQPLRSLRRRTDRLAVLATWLGCLVASAPQVHIFSLREVADGVFDCWAVFIQPWGPKAYITWITLAVYIVPVIVLAACYGLISFKIWQNLRLKTAAAAAAEAPEGAAAGDGGRVALARVSSVKLISKAKIRTVKMTFIIVLAFIVCWTPFFFVQMWSVWDANAPKEASAFIIVMLLASLNSCCNPWIYMLFTGHLFHELVQRFLCCSASYLKGRRLGETSASKKSNSSSFVLSHRSSSQRSCSQPSTA.

The Extracellular segment spans residues 1–38; that stretch reads MEGALAANWSAEAANASAAPPGAEGNRTAGPPRRNEAL. Low complexity predominate over residues 7–26; the sequence is ANWSAEAANASAAPPGAEGN. A disordered region spans residues 7-31; that stretch reads ANWSAEAANASAAPPGAEGNRTAGP. N-linked (GlcNAc...) asparagine glycosylation is found at Asn8, Asn15, and Asn26. Residues 39 to 63 form a helical membrane-spanning segment; it reads ARVEVAVLCLILLLALSGNACVLLA. At 64 to 74 the chain is on the cytoplasmic side; that stretch reads LRTTRQKHSRL. Residues 75–97 form a helical membrane-spanning segment; sequence FFFMKHLSIADLVVAVFQVLPQL. Topologically, residues 98 to 113 are extracellular; that stretch reads LWDITFRFYGPDLLCR. Cys112 and Cys187 are oxidised to a cystine. A helical membrane pass occupies residues 114 to 135; that stretch reads LVKYLQVVGMFASTYLLLLMSL. The Cytoplasmic portion of the chain corresponds to 136–154; that stretch reads DRCLAICQPLRSLRRRTDR. Residues 155–175 form a helical membrane-spanning segment; the sequence is LAVLATWLGCLVASAPQVHIF. Topologically, residues 176 to 202 are extracellular; sequence SLREVADGVFDCWAVFIQPWGPKAYIT. Residues 203 to 225 form a helical membrane-spanning segment; the sequence is WITLAVYIVPVIVLAACYGLISF. The Cytoplasmic portion of the chain corresponds to 226–275; that stretch reads KIWQNLRLKTAAAAAAEAPEGAAAGDGGRVALARVSSVKLISKAKIRTVK. A helical transmembrane segment spans residues 276-294; that stretch reads MTFIIVLAFIVCWTPFFFV. The Extracellular portion of the chain corresponds to 295–309; sequence QMWSVWDANAPKEAS. The helical transmembrane segment at 310-332 threads the bilayer; it reads AFIIVMLLASLNSCCNPWIYMLF. At 333 to 389 the chain is on the cytoplasmic side; sequence TGHLFHELVQRFLCCSASYLKGRRLGETSASKKSNSSSFVLSHRSSSQRSCSQPSTA. Residues 361–389 form a disordered region; that stretch reads SASKKSNSSSFVLSHRSSSQRSCSQPSTA. Residues Ser366 and Ser368 each carry the phosphoserine modification.

Belongs to the G-protein coupled receptor 1 family. Vasopressin/oxytocin receptor subfamily.

The protein resides in the cell membrane. Its function is as follows. Receptor for oxytocin. The activity of this receptor is mediated by G proteins which activate a phosphatidylinositol-calcium second messenger system. The polypeptide is Oxytocin receptor (OXTR) (Homo sapiens (Human)).